A 1687-amino-acid polypeptide reads, in one-letter code: Genome polyprotein (1687 aa).

Positions 1-13 are enriched in polar residues; the sequence is MRMATPSSAPSVR. The segment at 1-56 is disordered; that stretch reads MRMATPSSAPSVRNTEKRKNKKASSKASVSFGAPSPLSSESEDEINYMTPPEQEAQ. Positions 1–116 are interaction with host MAP1LC3A/LC3; it reads MRMATPSSAP…FRRYPHLRPK (116 aa). The segment at 117 to 341 is interaction with NTPase; that stretch reads EDRPDAPSHA…ISIFGEWQAE (225 aa). An interaction with NS4 region spans residues 244–341; sequence SPVQDWNVDP…ISIFGEWQAE (98 aa). Host ER membrane association regions lie at residues 261-292 and 302-341; these read KLRMVSDGILVALSAVIGRPIKNLLASVKPLN and WTFSGIVNALILLAELFDIFWTPPDVTNWMISIFGEWQAE. The interval 342-518 is interaction with NS1-2, NS4 and homooligomerization; it reads GPFDLALDVV…GKTCFCQNLA (177 aa). An SF3 helicase domain is found at 476-641; sequence RISMARAAFE…DDARARAPGD (166 aa). Residue 504 to 511 coordinates ATP; sequence GRPGIGKT. Positions 595-700 are important for mitochondrion targeting; that stretch reads VIIITTNQQT…AVALVHERHD (106 aa). The tract at residues 893 to 898 is acidic; the sequence is DEEYDE. Residue Tyr896 is modified to O-(5'-phospho-RNA)-tyrosine. The interaction with host EIF4G stretch occupies residues 978–994; it reads WADDDRQVDYGEKINFE. Residues 995-1172 enclose the Peptidase C37 domain; the sequence is APVSIWSRVV…AATHGEPTLE (178 aa). Active-site for 3CLpro activity residues include His1024, Asp1048, and Cys1133. One can recognise a RdRp catalytic domain in the interval 1416–1537; the sequence is RYHMDADYTR…STNLELDMVK (122 aa). Mg(2+) is bound by residues Asp1420 and Asp1422. An intrachain disulfide couples Cys1482 to Cys1484. Mg(2+)-binding residues include Asp1524, Glu1525, and Ser1569.

As to quaternary structure, homodimer. Interacts with NTPase; this interaction increases the proapoptotic activity of the NTPase and is crucial for the formation of the viral replication complex. Interacts with NS4; this interaction is crucial for the formation of the viral replication complex. Interacts (via N-terminus) with host VAPA. Interacts with host VAPB. In terms of assembly, monomer. Homooligomer. Interacts with NS1-2; this interaction increases the proapoptotic activity of the NTPase and is crucial for the formation of the viral replication complex. Interacts with NS4; this interaction increases the proapoptotic activity of the NTPase. Interacts with host G3BP1; this interaction leads to the redistribution of G3BP1 and its cellular partners to the viral replication complexes, thereby preventing the assembly of stress granules. As to quaternary structure, homodimer. Monomer; in solution. In terms of assembly, interacts with NTPase; this interaction increases the proapoptotic activity of the NTPase. Interacts with NS1-2; this interaction is crucial for the formation of the viral replication complex. Monomer. Interacts with the RNA-directed RNA polymerase; this interaction induces the multimerization of the RdRp and enhances its activity. Interacts with host IEF4E; this interaction plays a role in translation of viral proteins. Interacts (via C-terminus) with host IEF4G1 (via central domain); this interaction plays a role in translation of viral proteins. As to quaternary structure, homohexamer; also forms fibrous hexameric oligomer. Interacts with the viral genome-linked protein; this interaction induces the multimerization of the RdRp and enhances its activity. It depends on Mg(2+) as a cofactor. Requires Mn(2+) as cofactor. Specific enzymatic cleavages in vivo yield mature proteins. 3CLpro is first autocatalytically cleaved, then processes the whole polyprotein. Post-translationally, cleaved by host CASP3/caspase 3 at 18-22 h.p.i. The cleavage allows NS1 secretion, which is essential for intestinal infection and resistance to IFN-lambda. In terms of processing, VPg is uridylylated by the polymerase and is covalently attached to the 5'-end of the polyadenylated genomic and subgenomic RNAs. This uridylylated form acts as a nucleotide-peptide primer for the polymerase.

The protein localises to the host endoplasmic reticulum membrane. It is found in the secreted. It localises to the host endosome membrane. The protein resides in the host mitochondrion. Its subcellular location is the host cytoplasm. The protein localises to the host perinuclear region. The enzyme catalyses a ribonucleoside 5'-triphosphate + H2O = a ribonucleoside 5'-diphosphate + phosphate + H(+). It carries out the reaction Endopeptidase with a preference for cleavage when the P1 position is occupied by Glu-|-Xaa and the P1' position is occupied by Gly-|-Yaa.. The catalysed reaction is RNA(n) + a ribonucleoside 5'-triphosphate = RNA(n+1) + diphosphate. Inhibited by Suramin, Suramin-related compounds and NF023. Inhibited by PPNDS. Functionally, induces the proliferation of the host smooth ER membranes forming long tubular structures. These remodeled membranes probably form the viral factories that contain the replication complex. May play a role in viral replication by interacting with host VAPA, a vesicle-associated membrane protein that plays a role in SNARE-mediated vesicle fusion. This interaction may target replication complex to intracellular membranes. Its function is as follows. Promotes intestinal tropism and persistent fecal shedding in strain CR6. This function requires Glu-94 and is present in persistant strains. Displays NTPase activity, but probably no helicase activity. Displays RNA chaperone-like activity and destabilizes dsRNA. Induces the formation of convoluted membranes derived from the host ER. These remodeled membranes probably form the viral factories that contain the replication complex. Initiates host cell death by targeting the mitochondrial outer membrane, leading to the permeabilization of mitochondria, programmed host cell death and viral egress. Externalization of host cardiolipin seems to be involved in the process. Probably plays a role in preventing the assembly of host stress granules. In terms of biological role, probable key protein responsible for the formation of membrane alterations by the virus. Induces the formation of convoluted membranes derived from the host ER. These remodeled membranes probably form the viral factories that contain the replication complex. May play a role in targeting replication complex to intracellular membranes. Functionally, viral genome-linked protein is covalently linked to the 5'-end of the positive-strand, negative-strand genomic RNAs and subgenomic RNA. Acts as a genome-linked replication primer. May recruit ribosome to viral RNA thereby promoting viral proteins translation. Interacts with host translation initiation complex to allow the translation of viral proteins. Induces the formation of aggregates of RNA-directed RNA polymerase in the presence of RNA. Through its interaction with the viral RNA-directed RNA polymerase, plays a crucial role in enhancing the polymerase activity. Its function is as follows. Processes the polyprotein. 3CLpro-RdRp is first released by autocleavage, then all other proteins are cleaved. May cleave host polyadenylate-binding protein thereby inhibiting cellular translation. Does not cleave host G3BP1. Replicates genomic and antigenomic RNA by recognizing replications specific signals. Also transcribes a subgenomic mRNA by initiating RNA synthesis internally on antigenomic RNA. This sgRNA codes for structural proteins. Catalyzes the covalent attachment VPg with viral RNAs. The polypeptide is Genome polyprotein (Norovirus (isolate Mouse/NoV/United States/MNV1/2002/GV) (MNV-1)).